We begin with the raw amino-acid sequence, 347 residues long: L-Ala-D/L-amino acid epimerase (347 aa).

A substrate-binding site is contributed by 156–158 (KLK). 3 residues coordinate Mg(2+): Asp-183, Glu-211, and Asp-237. Substrate-binding positions include Lys-259 and 309–311 (DID).

It belongs to the mandelate racemase/muconate lactonizing enzyme family. Mg(2+) serves as cofactor.

Dipeptide epimerase with a broad substrate specificity. Catalyzes the epimerization of L-Ala-L-Ala, L-Ala-L-Ser, L-Ala-L-Thr, L-Ala-L-Met, L-Ala-L-Phe, L-Ala-L-Tyr, L-Gly-L-Asp, L-Val-L-Asp, L-Val-L-Glu and L-Val-L-Phe (in vitro). Can also catalyze the epimerization of L-Ala-L-Glu, but with lower efficiency. In Pedosphaera parvula (strain Ellin514), this protein is L-Ala-D/L-amino acid epimerase.